The chain runs to 220 residues: Probable N-acetyl-alpha-D-glucosaminyl L-malate deacetylase 2 (220 aa).

3 residues coordinate Zn(2+): His-11, Asp-14, and His-125.

Belongs to the PIGL family. It depends on Zn(2+) as a cofactor.

It catalyses the reaction (S)-malyl N-acetyl-alpha-D-glucosaminide + H2O = (S)-malyl alpha-D-glucosaminide + acetate. Functionally, involved in bacillithiol (BSH) biosynthesis. Catalyzes the second step of the pathway, the deacetylation of N-acetylglucosaminylmalate (GlcNAc-Mal) to glucosamine malate (GlcN-Mal). Has weak activity compared with bshB1. This is Probable N-acetyl-alpha-D-glucosaminyl L-malate deacetylase 2 from Bacillus cereus (strain ATCC 14579 / DSM 31 / CCUG 7414 / JCM 2152 / NBRC 15305 / NCIMB 9373 / NCTC 2599 / NRRL B-3711).